The following is a 301-amino-acid chain: tRNA dimethylallyltransferase (301 aa).

10–17 (GATATGKT) contacts ATP. Residue 12 to 17 (TATGKT) coordinates substrate. The interaction with substrate tRNA stretch occupies residues 35-38 (DSRQ).

The protein belongs to the IPP transferase family. As to quaternary structure, monomer. Mg(2+) is required as a cofactor.

It carries out the reaction adenosine(37) in tRNA + dimethylallyl diphosphate = N(6)-dimethylallyladenosine(37) in tRNA + diphosphate. Its function is as follows. Catalyzes the transfer of a dimethylallyl group onto the adenine at position 37 in tRNAs that read codons beginning with uridine, leading to the formation of N6-(dimethylallyl)adenosine (i(6)A). The protein is tRNA dimethylallyltransferase of Crocosphaera subtropica (strain ATCC 51142 / BH68) (Cyanothece sp. (strain ATCC 51142)).